Reading from the N-terminus, the 251-residue chain is Malonyl-[acyl-carrier protein] O-methyltransferase (251 aa).

Belongs to the methyltransferase superfamily.

It catalyses the reaction malonyl-[ACP] + S-adenosyl-L-methionine = malonyl-[ACP] methyl ester + S-adenosyl-L-homocysteine. It participates in cofactor biosynthesis; biotin biosynthesis. Functionally, converts the free carboxyl group of a malonyl-thioester to its methyl ester by transfer of a methyl group from S-adenosyl-L-methionine (SAM). It allows to synthesize pimeloyl-ACP via the fatty acid synthetic pathway. This is Malonyl-[acyl-carrier protein] O-methyltransferase from Salmonella typhimurium (strain LT2 / SGSC1412 / ATCC 700720).